The sequence spans 273 residues: 5-deoxy-glucuronate isomerase (273 aa).

Belongs to the isomerase IolB family.

It catalyses the reaction 5-deoxy-D-glucuronate = 5-dehydro-2-deoxy-D-gluconate. The protein operates within polyol metabolism; myo-inositol degradation into acetyl-CoA; acetyl-CoA from myo-inositol: step 4/7. In terms of biological role, involved in the isomerization of 5-deoxy-glucuronate (5DG) to 5-dehydro-2-deoxy-D-gluconate (DKG or 2-deoxy-5-keto-D-gluconate). The polypeptide is 5-deoxy-glucuronate isomerase (Listeria monocytogenes serotype 4a (strain HCC23)).